Here is a 484-residue protein sequence, read N- to C-terminus: Protein nucleotidyltransferase YdiU (484 aa).

ATP is bound by residues G81, G83, R84, K103, D115, G116, R166, and R173. D244 acts as the Proton acceptor in catalysis. Residues N245 and D254 each contribute to the Mg(2+) site. Residue D254 participates in ATP binding.

The protein belongs to the SELO family. Mg(2+) is required as a cofactor. The cofactor is Mn(2+).

It carries out the reaction L-seryl-[protein] + ATP = 3-O-(5'-adenylyl)-L-seryl-[protein] + diphosphate. The enzyme catalyses L-threonyl-[protein] + ATP = 3-O-(5'-adenylyl)-L-threonyl-[protein] + diphosphate. The catalysed reaction is L-tyrosyl-[protein] + ATP = O-(5'-adenylyl)-L-tyrosyl-[protein] + diphosphate. It catalyses the reaction L-histidyl-[protein] + UTP = N(tele)-(5'-uridylyl)-L-histidyl-[protein] + diphosphate. It carries out the reaction L-seryl-[protein] + UTP = O-(5'-uridylyl)-L-seryl-[protein] + diphosphate. The enzyme catalyses L-tyrosyl-[protein] + UTP = O-(5'-uridylyl)-L-tyrosyl-[protein] + diphosphate. Its function is as follows. Nucleotidyltransferase involved in the post-translational modification of proteins. It can catalyze the addition of adenosine monophosphate (AMP) or uridine monophosphate (UMP) to a protein, resulting in modifications known as AMPylation and UMPylation. The sequence is that of Protein nucleotidyltransferase YdiU from Shewanella baltica (strain OS155 / ATCC BAA-1091).